The chain runs to 712 residues: Ribosomal RNA large subunit methyltransferase K/L (712 aa).

The THUMP domain occupies 43–154 (LAYRITLWTR…NGQLTISMNF (112 aa)).

It belongs to the methyltransferase superfamily. RlmKL family.

The protein localises to the cytoplasm. It carries out the reaction guanosine(2445) in 23S rRNA + S-adenosyl-L-methionine = N(2)-methylguanosine(2445) in 23S rRNA + S-adenosyl-L-homocysteine + H(+). It catalyses the reaction guanosine(2069) in 23S rRNA + S-adenosyl-L-methionine = N(2)-methylguanosine(2069) in 23S rRNA + S-adenosyl-L-homocysteine + H(+). Specifically methylates the guanine in position 2445 (m2G2445) and the guanine in position 2069 (m7G2069) of 23S rRNA. This Shewanella frigidimarina (strain NCIMB 400) protein is Ribosomal RNA large subunit methyltransferase K/L.